A 184-amino-acid chain; its full sequence is Two-component response regulator ARR5 (184 aa).

The region spanning 26-154 (HVLAVDDSMV…DVKRLRDSLM (129 aa)) is the Response regulatory domain. Asp-87 is modified (4-aspartylphosphate).

Belongs to the ARR family. Type-A subfamily. In terms of processing, two-component system major event consists of a His-to-Asp phosphorelay between a sensor histidine kinase (HK) and a response regulator (RR). In plants, the His-to-Asp phosphorelay involves an additional intermediate named Histidine-containing phosphotransfer protein (HPt). This multistep phosphorelay consists of a His-Asp-His-Asp sequential transfer of a phosphate group between first a His and an Asp of the HK protein, followed by the transfer to a conserved His of the HPt protein and finally the transfer to an Asp in the receiver domain of the RR protein. Predominantly expressed in roots and shoot apical meristems.

It localises to the nucleus. Functions as a response regulator involved in His-to-Asp phosphorelay signal transduction system. Phosphorylation of the Asp residue in the receiver domain activates the ability of the protein to promote the transcription of target genes. Type-A response regulators seem to act as negative regulators of the cytokinin signaling. This is Two-component response regulator ARR5 (ARR5) from Arabidopsis thaliana (Mouse-ear cress).